The sequence spans 410 residues: Putative ribonuclease E (410 aa).

The S1 motif domain maps to 39 to 119 (SNIYKGKIVR…GTKGALLTTF (81 aa)). Asp-303 and Asp-346 together coordinate Mg(2+).

It belongs to the RNase E/G family. RNase E subfamily. As to quaternary structure, component of the RNA degradosome, which is a multiprotein complex involved in RNA processing and mRNA degradation. Within the RNA degradosome, RNase E assembles into a homotetramer formed by a dimer of dimers. Requires Mg(2+) as cofactor.

Its subcellular location is the cytoplasm. It is found in the cell inner membrane. The enzyme catalyses Endonucleolytic cleavage of single-stranded RNA in A- and U-rich regions.. In terms of biological role, endoribonuclease that plays a central role in RNA processing and decay. Required for the maturation of 5S and 16S rRNAs and the majority of tRNAs. Also involved in the degradation of most mRNAs. This chain is Putative ribonuclease E (rne), found in Buchnera aphidicola subsp. Baizongia pistaciae (strain Bp).